Consider the following 407-residue polypeptide: Putative colanic acid biosynthesis glycosyl transferase WcaI (407 aa).

It participates in slime biogenesis; slime polysaccharide biosynthesis. The sequence is that of Putative colanic acid biosynthesis glycosyl transferase WcaI (wcaI) from Escherichia coli (strain K12).